A 294-amino-acid chain; its full sequence is Elongation factor Ts (294 aa).

The segment at 80-83 is involved in Mg(2+) ion dislocation from EF-Tu; the sequence is TDFV.

It belongs to the EF-Ts family.

It localises to the cytoplasm. Associates with the EF-Tu.GDP complex and induces the exchange of GDP to GTP. It remains bound to the aminoacyl-tRNA.EF-Tu.GTP complex up to the GTP hydrolysis stage on the ribosome. This Polynucleobacter necessarius subsp. necessarius (strain STIR1) protein is Elongation factor Ts.